We begin with the raw amino-acid sequence, 497 residues long: MIGSLHEIIRLDASTLAAKIVAKELSSVEITQACLDQIEATDDTYRAFLHVAAEKALSAAAAVDKAVAAGGQLSSTLAGVPLALKDVFTTVDMPTTCGSKILQGWHSPYDATVTTRLRAAGIPILGKTNMDEFAMGSSTENSAYGPTRNPWNVDRVPGGSGGGSAAALAAFQAPLAIGSDTGGSIRQPAALTATVGVKPTYGTVSRYGLVACASSLDQGGPCARTVLDTALLHAVIAGHDARDSTSVEAAVPDIVGAAKAGESGDLHGVRVGVVRQLRGEGYQSGVLASFQAAVEQLIALGATVSEVDCPHFDYALAAYYLILPSEVSSNLARFDAMRYGLRVGDDGSRSAEEVIALTRAAGFGPEVKRRIMIGAYALSAGYYDSYYSQAQKVRTLIARDLDKAYRSVDVLVSPATPTTAFSLGEKADDPLAMYLFDLCTLPLNLAGHCGMSVPSGLSSDDDLPVGLQIMAPALADDRLYRVGAAYEAARGPLPSAI.

Catalysis depends on charge relay system residues lysine 85 and serine 160. The active-site Acyl-ester intermediate is the serine 184.

Belongs to the amidase family. GatA subfamily. As to quaternary structure, heterotrimer of A, B and C subunits.

It carries out the reaction L-glutamyl-tRNA(Gln) + L-glutamine + ATP + H2O = L-glutaminyl-tRNA(Gln) + L-glutamate + ADP + phosphate + H(+). Allows the formation of correctly charged Gln-tRNA(Gln) through the transamidation of misacylated Glu-tRNA(Gln) in organisms which lack glutaminyl-tRNA synthetase. The reaction takes place in the presence of glutamine and ATP through an activated gamma-phospho-Glu-tRNA(Gln). The polypeptide is Glutamyl-tRNA(Gln) amidotransferase subunit A (gatA) (Mycobacterium leprae (strain TN)).